Reading from the N-terminus, the 212-residue chain is Pyridoxine/pyridoxamine 5'-phosphate oxidase (212 aa).

Residues 7–10 (RREY) and Lys-65 contribute to the substrate site. Residues 60-65 (RIVLLK), 75-76 (FT), Arg-81, Lys-82, and Gln-104 contribute to the FMN site. Substrate contacts are provided by Tyr-122, Arg-126, and Ser-130. Residues 139–140 (QS) and Trp-184 each bind FMN. Residue 190–192 (RLH) participates in substrate binding. Arg-194 is an FMN binding site.

This sequence belongs to the pyridoxamine 5'-phosphate oxidase family. As to quaternary structure, homodimer. The cofactor is FMN.

It catalyses the reaction pyridoxamine 5'-phosphate + O2 + H2O = pyridoxal 5'-phosphate + H2O2 + NH4(+). The enzyme catalyses pyridoxine 5'-phosphate + O2 = pyridoxal 5'-phosphate + H2O2. It functions in the pathway cofactor metabolism; pyridoxal 5'-phosphate salvage; pyridoxal 5'-phosphate from pyridoxamine 5'-phosphate: step 1/1. The protein operates within cofactor metabolism; pyridoxal 5'-phosphate salvage; pyridoxal 5'-phosphate from pyridoxine 5'-phosphate: step 1/1. Functionally, catalyzes the oxidation of either pyridoxine 5'-phosphate (PNP) or pyridoxamine 5'-phosphate (PMP) into pyridoxal 5'-phosphate (PLP). The sequence is that of Pyridoxine/pyridoxamine 5'-phosphate oxidase from Pseudoalteromonas translucida (strain TAC 125).